The sequence spans 460 residues: UDP-N-acetylmuramoylalanine--D-glutamate ligase (460 aa).

120-126 is an ATP binding site; it reads GSNGKTT.

Belongs to the MurCDEF family.

Its subcellular location is the cytoplasm. It catalyses the reaction UDP-N-acetyl-alpha-D-muramoyl-L-alanine + D-glutamate + ATP = UDP-N-acetyl-alpha-D-muramoyl-L-alanyl-D-glutamate + ADP + phosphate + H(+). It participates in cell wall biogenesis; peptidoglycan biosynthesis. Cell wall formation. Catalyzes the addition of glutamate to the nucleotide precursor UDP-N-acetylmuramoyl-L-alanine (UMA). This Lactobacillus delbrueckii subsp. bulgaricus (strain ATCC 11842 / DSM 20081 / BCRC 10696 / JCM 1002 / NBRC 13953 / NCIMB 11778 / NCTC 12712 / WDCM 00102 / Lb 14) protein is UDP-N-acetylmuramoylalanine--D-glutamate ligase.